A 308-amino-acid chain; its full sequence is Ribosomal RNA large subunit methyltransferase F (308 aa).

This sequence belongs to the methyltransferase superfamily. METTL16/RlmF family.

It is found in the cytoplasm. It carries out the reaction adenosine(1618) in 23S rRNA + S-adenosyl-L-methionine = N(6)-methyladenosine(1618) in 23S rRNA + S-adenosyl-L-homocysteine + H(+). In terms of biological role, specifically methylates the adenine in position 1618 of 23S rRNA. In Salmonella schwarzengrund (strain CVM19633), this protein is Ribosomal RNA large subunit methyltransferase F.